A 301-amino-acid polypeptide reads, in one-letter code: 4-diphosphocytidyl-2-C-methyl-D-erythritol kinase (301 aa).

Residue lysine 18 is part of the active site. ATP is bound at residue 103–113; that stretch reads PVAAGIGGGSA. The active site involves aspartate 145.

The protein belongs to the GHMP kinase family. IspE subfamily.

It carries out the reaction 4-CDP-2-C-methyl-D-erythritol + ATP = 4-CDP-2-C-methyl-D-erythritol 2-phosphate + ADP + H(+). It participates in isoprenoid biosynthesis; isopentenyl diphosphate biosynthesis via DXP pathway; isopentenyl diphosphate from 1-deoxy-D-xylulose 5-phosphate: step 3/6. Catalyzes the phosphorylation of the position 2 hydroxy group of 4-diphosphocytidyl-2C-methyl-D-erythritol. The chain is 4-diphosphocytidyl-2-C-methyl-D-erythritol kinase from Bradyrhizobium sp. (strain BTAi1 / ATCC BAA-1182).